The following is a 586-amino-acid chain: Kelch-like protein 7 (586 aa).

In terms of domain architecture, BTB spans 44 to 111 (CDVILMVQER…AYTARISVNS (68 aa)). One can recognise a BACK domain in the interval 146–248 (CLGISVLAEC…SKNFLSKTVQ (103 aa)). Kelch repeat units follow at residues 294–336 (RIAL…FWDN), 337–382 (VVYI…AAEG), 383–430 (KIYT…EANG), 431–481 (LIYV…FVKD), 483–528 (IFAV…AVGS), and 530–575 (IYVL…CVVD).

In terms of assembly, homodimer. Component of the BCR(KLHL7) E3 ubiquitin ligase complex, at least composed of CUL3 and KLHL7 and RBX1.

The protein localises to the nucleus. It is found in the cytoplasm. It participates in protein modification; protein ubiquitination. Substrate-specific adapter of a BCR (BTB-CUL3-RBX1) E3 ubiquitin ligase complex. The BCR(KLHL7) complex acts by mediating ubiquitination and subsequent degradation of substrate proteins. Probably mediates 'Lys-48'-linked ubiquitination. This is Kelch-like protein 7 (Klhl7) from Rattus norvegicus (Rat).